Here is a 139-residue protein sequence, read N- to C-terminus: MAASPLVVQKTEEEWRAVLSPEQFRILRQKGTEKPGTGEYDKFFEEGIFDCVGCKTPLYKSTTKFDSGCGWPAFFEGLPGAINRTPDPDGRRTEITCAACDGHLGHVFKGEGYGNPTDERHCVNSVSISFNPAKSSSII.

The residue at position 2 (alanine 2) is an N-acetylalanine. The MsrB domain occupies 12-133 (EEEWRAVLSP…NSVSISFNPA (122 aa)). Cysteine 51, cysteine 54, cysteine 97, and cysteine 100 together coordinate Zn(2+). Cysteine 69 and cysteine 122 are oxidised to a cystine. Cysteine 122 serves as the catalytic Nucleophile.

Belongs to the MsrB Met sulfoxide reductase family. Zn(2+) serves as cofactor.

It is found in the cytoplasm. Its subcellular location is the cytosol. The catalysed reaction is L-methionyl-[protein] + [thioredoxin]-disulfide + H2O = L-methionyl-(R)-S-oxide-[protein] + [thioredoxin]-dithiol. Functionally, catalyzes the reduction of methionine sulfoxide (MetSO) to methionine in proteins. Plays a protective role against oxidative stress by restoring activity to proteins that have been inactivated by methionine oxidation. MSRB family specifically reduces the MetSO R-enantiomer. In Arabidopsis thaliana (Mouse-ear cress), this protein is Peptide methionine sulfoxide reductase B5 (MSRB5).